The sequence spans 862 residues: Cone cGMP-specific 3',5'-cyclic phosphodiesterase subunit alpha' (862 aa).

GAF domains are found at residues 75–224 (SMEK…SLVL) and 256–433 (DIER…GWSV). 3',5'-cyclic GMP contacts are provided by residues serine 97, asparagine 116, 169–172 (DKKT), and threonine 176. Residues 486–819 (DEKDLIRILK…VEWKTRADEY (334 aa)) form the PDEase domain. Histidine 562 functions as the Proton donor in the catalytic mechanism. Residues histidine 566, histidine 602, aspartate 603, and aspartate 723 each coordinate a divalent metal cation. The span at 830–842 (KKKEEEAAAKKAE) shows a compositional bias: basic and acidic residues. The tract at residues 830–862 (KKKEEEAAAKKAENAAGGGGGGEDGKSKTCIVL) is disordered. Cysteine 859 bears the Cysteine methyl ester mark. Cysteine 859 carries S-geranylgeranyl cysteine lipidation. A propeptide spans 860-862 (IVL) (removed in mature form).

Belongs to the cyclic nucleotide phosphodiesterase family. In terms of assembly, composed of two alpha' subunits that are associated with 3 smaller proteins of 11, 13, and 15 kDa. A divalent metal cation is required as a cofactor.

It localises to the cell membrane. The enzyme catalyses 3',5'-cyclic GMP + H2O = GMP + H(+). Functionally, as cone-specific cGMP phosphodiesterase, it plays an essential role in light detection and cone phototransduction by rapidly decreasing intracellular levels of cGMP. The sequence is that of Cone cGMP-specific 3',5'-cyclic phosphodiesterase subunit alpha' (PDE6C) from Gallus gallus (Chicken).